Reading from the N-terminus, the 360-residue chain is Leukotriene B4 receptor 2 (360 aa).

The Extracellular portion of the chain corresponds to 1 to 24 (MSVCYRPPGNETLLSWKGSRATGT). N-linked (GlcNAc...) asparagine glycosylation occurs at asparagine 10. Residues 25–45 (AFLLLAALLGLPGNGFVVWSL) form a helical membrane-spanning segment. Residues 46–60 (AGWRPTAGRPLAATL) lie on the Cytoplasmic side of the membrane. Residues 61–81 (VLHLALADGAVLLLTPLFVAF) traverse the membrane as a helical segment. The Extracellular portion of the chain corresponds to 82–96 (LSQEAWPLGQVGCKA). Residues 97-117 (VYYVCALSMYASVLLTGLLSL) form a helical membrane-spanning segment. Over 118–140 (QRCLAVTRPFLAPRLRSPALARR) the chain is Cytoplasmic. A helical transmembrane segment spans residues 141–161 (LLLGVWLAALVLAVPAAVYRH). Over 162–185 (LWGGRVCQLCHPSPVHAAAHLSLE) the chain is Extracellular. Residues 186–206 (TLTAFVLPFGTVLGCYGVTLA) form a helical membrane-spanning segment. Topologically, residues 207-224 (RLRGARWGSGRQGTRVGR) are cytoplasmic. A helical membrane pass occupies residues 225–245 (LVSAIVLAFGLLWAPYHAVNL). Residues 246–275 (LQAVAALAPPEGPLARLGGAGQAARAGTTA) are Extracellular-facing. Residues 276 to 296 (LAFFSSSVNPVLYVFTAGDLL) traverse the membrane as a helical segment. Residues 297–360 (PRAGPRFLTR…GKTEKDSQEW (64 aa)) are Cytoplasmic-facing. The disordered stretch occupies residues 311 to 360 (SGEARGGSRSREGTMELRTTPKLKVMGQGRGNGDPGGGDGGKTEKDSQEW). A compositionally biased stretch (gly residues) spans 338 to 350 (QGRGNGDPGGGDG). Residues 351-360 (GKTEKDSQEW) are compositionally biased toward basic and acidic residues.

The protein belongs to the G-protein coupled receptor 1 family.

Its subcellular location is the cell membrane. Low-affinity receptor for leukotrienes including leukotriene B4. Mediates chemotaxis of granulocytes and macrophages. The response is mediated via G-proteins that activate a phosphatidylinositol-calcium second messenger system. This is Leukotriene B4 receptor 2 (Ltb4r2) from Mus musculus (Mouse).